The following is a 137-amino-acid chain: Chaperone protein YscB (137 aa).

In terms of assembly, interacts with SycN to form a complex which specifically binds to YopN.

It localises to the cytoplasm. The protein resides in the cell inner membrane. Its function is as follows. Functions as a specific chaperone for YopN. It could facilitate the secretion and the subsequent translocation of YopN. This is Chaperone protein YscB (yscB) from Yersinia pestis.